We begin with the raw amino-acid sequence, 176 residues long: Large ribosomal subunit protein uL16 (176 aa).

This sequence belongs to the universal ribosomal protein uL16 family.

The protein is Large ribosomal subunit protein uL16 of Sulfolobus acidocaldarius (strain ATCC 33909 / DSM 639 / JCM 8929 / NBRC 15157 / NCIMB 11770).